The chain runs to 325 residues: ATP phosphoribosyltransferase (325 aa).

It belongs to the ATP phosphoribosyltransferase family. Long subfamily. It depends on Mg(2+) as a cofactor.

It localises to the cytoplasm. It carries out the reaction 1-(5-phospho-beta-D-ribosyl)-ATP + diphosphate = 5-phospho-alpha-D-ribose 1-diphosphate + ATP. It functions in the pathway amino-acid biosynthesis; L-histidine biosynthesis; L-histidine from 5-phospho-alpha-D-ribose 1-diphosphate: step 1/9. Its activity is regulated as follows. Feedback inhibited by histidine. Functionally, catalyzes the condensation of ATP and 5-phosphoribose 1-diphosphate to form N'-(5'-phosphoribosyl)-ATP (PR-ATP). Has a crucial role in the pathway because the rate of histidine biosynthesis seems to be controlled primarily by regulation of HisG enzymatic activity. This is ATP phosphoribosyltransferase from Rhodopseudomonas palustris (strain BisB18).